Consider the following 257-residue polypeptide: Pimeloyl-[acyl-carrier protein] methyl ester esterase (257 aa).

The region spanning 16–240 (LVLIHGWGMN…EQASHAPFIS (225 aa)) is the AB hydrolase-1 domain. Substrate contacts are provided by residues tryptophan 22, 82-83 (SL), and 143-147 (FMALQ). Residue serine 82 is the Nucleophile of the active site. Active-site residues include aspartate 207 and histidine 235. A substrate-binding site is contributed by histidine 235.

Belongs to the AB hydrolase superfamily. Carboxylesterase BioH family. In terms of assembly, monomer.

It localises to the cytoplasm. It catalyses the reaction 6-carboxyhexanoyl-[ACP] methyl ester + H2O = 6-carboxyhexanoyl-[ACP] + methanol + H(+). Its pathway is cofactor biosynthesis; biotin biosynthesis. In terms of biological role, the physiological role of BioH is to remove the methyl group introduced by BioC when the pimeloyl moiety is complete. It allows to synthesize pimeloyl-ACP via the fatty acid synthetic pathway through the hydrolysis of the ester bonds of pimeloyl-ACP esters. This chain is Pimeloyl-[acyl-carrier protein] methyl ester esterase, found in Aliivibrio fischeri (strain MJ11) (Vibrio fischeri).